A 159-amino-acid polypeptide reads, in one-letter code: Endoribonuclease YbeY (159 aa).

Zn(2+) is bound by residues His-126, His-130, and His-136.

This sequence belongs to the endoribonuclease YbeY family. Requires Zn(2+) as cofactor.

It is found in the cytoplasm. In terms of biological role, single strand-specific metallo-endoribonuclease involved in late-stage 70S ribosome quality control and in maturation of the 3' terminus of the 16S rRNA. This chain is Endoribonuclease YbeY, found in Thermodesulfovibrio yellowstonii (strain ATCC 51303 / DSM 11347 / YP87).